An 861-amino-acid polypeptide reads, in one-letter code: Leucine--tRNA ligase (861 aa).

Positions Pro42–His52 match the 'HIGH' region motif. The 'KMSKS' region motif lies at Lys620–Ser624. Lys623 is an ATP binding site.

It belongs to the class-I aminoacyl-tRNA synthetase family.

It localises to the cytoplasm. It catalyses the reaction tRNA(Leu) + L-leucine + ATP = L-leucyl-tRNA(Leu) + AMP + diphosphate. This is Leucine--tRNA ligase from Baumannia cicadellinicola subsp. Homalodisca coagulata.